Reading from the N-terminus, the 88-residue chain is Small ribosomal subunit protein bS20 (88 aa).

This sequence belongs to the bacterial ribosomal protein bS20 family.

In terms of biological role, binds directly to 16S ribosomal RNA. The chain is Small ribosomal subunit protein bS20 from Chelativorans sp. (strain BNC1).